The sequence spans 292 residues: 4-hydroxy-tetrahydrodipicolinate synthase (292 aa).

Threonine 50 provides a ligand contact to pyruvate. Catalysis depends on tyrosine 139, which acts as the Proton donor/acceptor. Lysine 167 acts as the Schiff-base intermediate with substrate in catalysis. Isoleucine 208 provides a ligand contact to pyruvate.

The protein belongs to the DapA family. In terms of assembly, homotetramer; dimer of dimers.

The protein resides in the cytoplasm. It catalyses the reaction L-aspartate 4-semialdehyde + pyruvate = (2S,4S)-4-hydroxy-2,3,4,5-tetrahydrodipicolinate + H2O + H(+). Its pathway is amino-acid biosynthesis; L-lysine biosynthesis via DAP pathway; (S)-tetrahydrodipicolinate from L-aspartate: step 3/4. In terms of biological role, catalyzes the condensation of (S)-aspartate-beta-semialdehyde [(S)-ASA] and pyruvate to 4-hydroxy-tetrahydrodipicolinate (HTPA). This chain is 4-hydroxy-tetrahydrodipicolinate synthase, found in Oenococcus oeni (strain ATCC BAA-331 / PSU-1).